Consider the following 227-residue polypeptide: Orotidine 5'-phosphate decarboxylase (227 aa).

Substrate is bound by residues aspartate 8, lysine 30, 59-68 (DLKLYDIPYT), threonine 118, arginine 178, glutamine 187, glycine 207, and arginine 208. Catalysis depends on lysine 61, which acts as the Proton donor.

The protein belongs to the OMP decarboxylase family. Type 1 subfamily. In terms of assembly, homodimer.

The enzyme catalyses orotidine 5'-phosphate + H(+) = UMP + CO2. It participates in pyrimidine metabolism; UMP biosynthesis via de novo pathway; UMP from orotate: step 2/2. Functionally, catalyzes the decarboxylation of orotidine 5'-monophosphate (OMP) to uridine 5'-monophosphate (UMP). The protein is Orotidine 5'-phosphate decarboxylase of Helicobacter pylori (strain ATCC 700392 / 26695) (Campylobacter pylori).